Here is a 483-residue protein sequence, read N- to C-terminus: Dual specificity protein phosphatase 10 (483 aa).

Residues 169–286 (PSQGPVIIDC…FKQNHGNLCD (118 aa)) enclose the Rhodanese domain. The interval 200–216 (KISRRRLQQGKITVLDL) is interaction with MAP kinases. The 144-residue stretch at 322 to 465 (ELTPILPFLF…LLEFEEDLNN (144 aa)) folds into the Tyrosine-protein phosphatase domain. Cys-409 functions as the Phosphocysteine intermediate in the catalytic mechanism.

This sequence belongs to the protein-tyrosine phosphatase family. Non-receptor class dual specificity subfamily. As to quaternary structure, monomer. Interacts with MAPK14.

The protein localises to the cytoplasm. Its subcellular location is the nucleus. The catalysed reaction is O-phospho-L-tyrosyl-[protein] + H2O = L-tyrosyl-[protein] + phosphate. It catalyses the reaction O-phospho-L-seryl-[protein] + H2O = L-seryl-[protein] + phosphate. The enzyme catalyses O-phospho-L-threonyl-[protein] + H2O = L-threonyl-[protein] + phosphate. Protein phosphatase involved in the inactivation of MAP kinases. Has a specificity for the MAPK11/MAPK12/MAPK13/MAPK14 subfamily. It preferably dephosphorylates p38. The polypeptide is Dual specificity protein phosphatase 10 (Dusp10) (Mus musculus (Mouse)).